A 393-amino-acid polypeptide reads, in one-letter code: Major outer membrane porin, serovar L1 (393 aa).

A signal peptide spans 1 to 22 (MKKLLKSVLVFAALSSASSLQA).

The protein belongs to the chlamydial porin (CP) (TC 1.B.2) family. Part of a disulfide cross-linked outer membrane complex (COMC) composed of the major outer membrane porin (MOMP), the small cysteine-rich protein (OmcA) and the large cysteine-rich periplasmic protein (OmcB).

The protein localises to the cell outer membrane. In terms of biological role, in elementary bodies (EBs, the infectious stage, which is able to survive outside the host cell) provides the structural integrity of the outer envelope through disulfide cross-links with the small cysteine-rich protein and the large cysteine-rich periplasmic protein. It has been described in publications as the Sarkosyl-insoluble COMC (Chlamydia outer membrane complex), and serves as the functional equivalent of peptidoglycan. Functionally, permits diffusion of specific solutes through the outer membrane. This chain is Major outer membrane porin, serovar L1 (ompA), found in Chlamydia trachomatis.